The chain runs to 102 residues: Small ribosomal subunit protein uS10 (102 aa).

It belongs to the universal ribosomal protein uS10 family. Part of the 30S ribosomal subunit.

Involved in the binding of tRNA to the ribosomes. In Bacillus anthracis (strain A0248), this protein is Small ribosomal subunit protein uS10.